The chain runs to 501 residues: L-arabinose isomerase (501 aa).

Residues glutamate 306, glutamate 333, histidine 350, and histidine 449 each contribute to the Mn(2+) site.

It belongs to the arabinose isomerase family. Mn(2+) is required as a cofactor.

The catalysed reaction is beta-L-arabinopyranose = L-ribulose. It functions in the pathway carbohydrate degradation; L-arabinose degradation via L-ribulose; D-xylulose 5-phosphate from L-arabinose (bacterial route): step 1/3. Its function is as follows. Catalyzes the conversion of L-arabinose to L-ribulose. The polypeptide is L-arabinose isomerase (Herpetosiphon aurantiacus (strain ATCC 23779 / DSM 785 / 114-95)).